Here is a 1022-residue protein sequence, read N- to C-terminus: Antigenic heat-stable 120 kDa protein (1022 aa).

Disordered stretches follow at residues 1–41 and 355–403; these read MSKD…QTTT and GQSK…PQSQ. Residues 19-34 show a composition bias toward basic and acidic residues; the sequence is EYTEEQKQTLEQEQKE. 2 stretches are compositionally biased toward polar residues: residues 355–380 and 387–403; these read GQSKEQPLITPQQTTSSSVEPPQYKQ and PTNQPLQPETSQMPQSQ.

Its subcellular location is the cytoplasm. The polypeptide is Antigenic heat-stable 120 kDa protein (sca4) (Rickettsia conorii (strain ATCC VR-613 / Malish 7)).